A 493-amino-acid polypeptide reads, in one-letter code: DM7 family protein GM11958 (493 aa).

The tract at residues 434–493 (ATKSTDTRDDGMNTADYQSQFPELEQDSEPEPEPEPEPQTEDEGEDEDIEILASLCSGSI) is disordered. The segment covering 457–483 (LEQDSEPEPEPEPEPQTEDEGEDEDIE) has biased composition (acidic residues).

The protein belongs to the DM7 family.

The chain is DM7 family protein GM11958 from Drosophila sechellia (Fruit fly).